The primary structure comprises 288 residues: 4-hydroxy-3-methylbut-2-enyl diphosphate reductase (288 aa).

Cys12 contributes to the [4Fe-4S] cluster binding site. The (2E)-4-hydroxy-3-methylbut-2-enyl diphosphate site is built by His42 and His77. Dimethylallyl diphosphate contacts are provided by His42 and His77. Isopentenyl diphosphate-binding residues include His42 and His77. Cys99 lines the [4Fe-4S] cluster pocket. (2E)-4-hydroxy-3-methylbut-2-enyl diphosphate is bound at residue His127. His127 provides a ligand contact to dimethylallyl diphosphate. His127 serves as a coordination point for isopentenyl diphosphate. Glu129 (proton donor) is an active-site residue. Thr165 is a (2E)-4-hydroxy-3-methylbut-2-enyl diphosphate binding site. Residue Cys193 participates in [4Fe-4S] cluster binding. Ser221, Ser222, Asn223, and Ser265 together coordinate (2E)-4-hydroxy-3-methylbut-2-enyl diphosphate. Ser221, Ser222, Asn223, and Ser265 together coordinate dimethylallyl diphosphate. Residues Ser221, Ser222, Asn223, and Ser265 each contribute to the isopentenyl diphosphate site.

It belongs to the IspH family. The cofactor is [4Fe-4S] cluster.

The enzyme catalyses isopentenyl diphosphate + 2 oxidized [2Fe-2S]-[ferredoxin] + H2O = (2E)-4-hydroxy-3-methylbut-2-enyl diphosphate + 2 reduced [2Fe-2S]-[ferredoxin] + 2 H(+). It carries out the reaction dimethylallyl diphosphate + 2 oxidized [2Fe-2S]-[ferredoxin] + H2O = (2E)-4-hydroxy-3-methylbut-2-enyl diphosphate + 2 reduced [2Fe-2S]-[ferredoxin] + 2 H(+). It functions in the pathway isoprenoid biosynthesis; dimethylallyl diphosphate biosynthesis; dimethylallyl diphosphate from (2E)-4-hydroxy-3-methylbutenyl diphosphate: step 1/1. Its pathway is isoprenoid biosynthesis; isopentenyl diphosphate biosynthesis via DXP pathway; isopentenyl diphosphate from 1-deoxy-D-xylulose 5-phosphate: step 6/6. Its function is as follows. Catalyzes the conversion of 1-hydroxy-2-methyl-2-(E)-butenyl 4-diphosphate (HMBPP) into a mixture of isopentenyl diphosphate (IPP) and dimethylallyl diphosphate (DMAPP). Acts in the terminal step of the DOXP/MEP pathway for isoprenoid precursor biosynthesis. The sequence is that of 4-hydroxy-3-methylbut-2-enyl diphosphate reductase from Caldanaerobacter subterraneus subsp. tengcongensis (strain DSM 15242 / JCM 11007 / NBRC 100824 / MB4) (Thermoanaerobacter tengcongensis).